Reading from the N-terminus, the 1139-residue chain is Hapless 2 (1139 aa).

The first 22 residues, Met1–Ala22, serve as a signal peptide directing secretion. Residues Glu23 to Arg630 are Extracellular-facing. 7 disulfides stabilise this stretch: Cys33-Cys44, Cys136-Cys164, Cys147-Cys210, Cys165-Cys383, Cys167-Cys190, Cys366-Cys390, and Cys475-Cys482. A compositionally biased stretch (low complexity) spans Ala241–Pro272. The tract at residues Ala241 to Arg283 is disordered. Asn497 carries an N-linked (GlcNAc...) asparagine glycan. Residues Cys515 and Cys556 are joined by a disulfide bond. An O-linked (GlcNAc...) threonine glycan is attached at Thr577. The chain crosses the membrane as a helical span at residues Leu631–Phe651. Residues Gly652–Lys1139 lie on the Cytoplasmic side of the membrane. Disordered stretches follow at residues Gly689–Ala719 and His741–Lys1139. The span at Gln753–Ala767 shows a compositional bias: basic and acidic residues. The segment covering Gly770–Ser789 has biased composition (low complexity). Residues Trp829 to Gly851 are compositionally biased toward basic and acidic residues. Positions Tyr868–Gly884 are enriched in gly residues. Residues Ala887–Pro904 show a composition bias toward pro residues. 2 stretches are compositionally biased toward gly residues: residues Pro919 to Gln943 and Arg955 to Gly965. Over residues Gly978–Gln991 the composition is skewed to pro residues. Positions Gly1018–Gly1029 are enriched in basic and acidic residues. The segment covering Gly1040–Gly1049 has biased composition (gly residues). The span at Ile1054–Tyr1067 shows a compositional bias: pro residues. Gly residues-rich tracts occupy residues Gly1078–Gly1096 and Gly1106–Arg1118.

It belongs to the HAP2/GCS1 family. Monomer. Homotrimer. Membrane contact and insertion (via its extracellular domain) into a lipid membrane probably triggers trimerization. The protein present at the cell membrane is rapidly degraded after fusion between male (minus) and female (plus) gametes, contrary to the protein present in intracellular pools. This may represent a mechanism to avoid fusion of several male gametes with a single female gamete. Post-translationally, N-glycosylated.

Its subcellular location is the cell membrane. It is found in the cell projection. It localises to the cytoplasmic vesicle membrane. During fertilization, required on male (minus) gametes for their fusion with female (plus) gametes. Required for membrane fusion, but not for the initial adhesion between gametes. Inserts (via its extracellular domain) into lipid membranes (in vitro). Probably initiates the fusion of gamete cell membranes by inserting its extracellular domain into the cell membrane of a female gamete. This chain is Hapless 2, found in Chlamydomonas reinhardtii (Chlamydomonas smithii).